A 736-amino-acid chain; its full sequence is 1,4-alpha-glucan branching enzyme GlgB (736 aa).

The Nucleophile role is filled by D415. E470 (proton donor) is an active-site residue.

This sequence belongs to the glycosyl hydrolase 13 family. GlgB subfamily. Monomer.

It carries out the reaction Transfers a segment of a (1-&gt;4)-alpha-D-glucan chain to a primary hydroxy group in a similar glucan chain.. It functions in the pathway glycan biosynthesis; glycogen biosynthesis. Functionally, catalyzes the formation of the alpha-1,6-glucosidic linkages in glycogen by scission of a 1,4-alpha-linked oligosaccharide from growing alpha-1,4-glucan chains and the subsequent attachment of the oligosaccharide to the alpha-1,6 position. This chain is 1,4-alpha-glucan branching enzyme GlgB, found in Paraburkholderia xenovorans (strain LB400).